Consider the following 463-residue polypeptide: MYGNYSHFMKFPTGFGGSPGHTGSTSMSPSVALPTGKPMDSHPSYTDTPVSAPRTLSAVGTPLNALGSPYRVITSAMGPPSGALAAPPGINLVAPPSSQLNVVNSVSSSEDIKPLPGLPGIGNMNYPSTSPGSLVKHICAICGDRSSGKHYGVYSCEGCKGFFKRTIRKDLIYTCRDNKDCLIDKRQRNRCQYCRYQKCLVMGMKREAVQEERQRSRERAESEAECASSSHEDMPVERILEAELAVEPKTESYGDMNVENSTNDPVTNICHAADKQLFTLVEWAKRIPHFSDLTLEDQVILLRAGWNELLIASFSHRSVSVQDGILLATGLHVHRSSAHSAGVGSIFDRVLTELVSKMKDMQMDKSELGCLRAIVLFNPDAKGLSNPSEVETLREKVYATLEAYTKQKYPEQPGRFAKLLLRLPALRSIGLKCLEHLFFFKLIGDTPIDSFLMEMLETPLQIT.

The interval 1 to 138 is modulating; it reads MYGNYSHFMK…TSPGSLVKHI (138 aa). Residues 16–53 are disordered; sequence GGSPGHTGSTSMSPSVALPTGKPMDSHPSYTDTPVSAP. NR C4-type zinc fingers lie at residues 139–159 and 175–199; these read CAIC…CEGC and CRDN…YQKC. The segment at residues 139 to 204 is a DNA-binding region (nuclear receptor); sequence CAICGDRSSG…RYQKCLVMGM (66 aa). The tract at residues 205–230 is hinge; it reads KREAVQEERQRSRERAESEAECASSS. The segment covering 211-222 has biased composition (basic and acidic residues); that stretch reads EERQRSRERAES. Residues 211–232 form a disordered region; sequence EERQRSRERAESEAECASSSHE. The NR LBD domain maps to 231–459; that stretch reads HEDMPVERIL…SFLMEMLETP (229 aa).

This sequence belongs to the nuclear hormone receptor family. NR2 subfamily. Homodimer. Heterodimer with a RAR molecule. Binds DNA preferentially as a RAR/RXR heterodimer. Interacts with RARA. In terms of processing, acetylated by EP300.

The protein resides in the nucleus. It is found in the cytoplasm. In terms of biological role, receptor for retinoic acid. Retinoic acid receptors bind as heterodimers to their target response elements in response to their ligands, all-trans or 9-cis retinoic acid, and regulate gene expression in various biological processes. The RAR/RXR heterodimers bind to the retinoic acid response elements (RARE) composed of tandem 5'-AGGTCA-3' sites known as DR1-DR5. The high affinity ligand for RXRs is 9-cis retinoic acid. This Mus musculus (Mouse) protein is Retinoic acid receptor RXR-gamma (Rxrg).